The primary structure comprises 476 residues: Stromelysin-2 (476 aa).

Positions 1–17 (MEPLAILALLSLPICSA) are cleaved as a signal peptide. A propeptide spans 18-99 (YPLHGAVTQG…PRCGVPDVGG (82 aa)) (activation peptide). The Cysteine switch motif lies at 90-97 (PRCGVPDV). Residues cysteine 92, histidine 168, aspartate 170, histidine 183, histidine 196, and histidine 218 each contribute to the Zn(2+) site. Glutamate 219 is an active-site residue. 2 residues coordinate Zn(2+): histidine 222 and histidine 228. Hemopexin repeat units follow at residues 286–335 (PDKC…WPTL), 336–382 (PSDL…GFPP), 384–432 (VKKI…FPGI), and 433–476 (EPQV…WLLC). A disulfide bridge links cysteine 289 with cysteine 476.

The protein belongs to the peptidase M10A family. Requires Zn(2+) as cofactor. The cofactor is Ca(2+). Expressed in small intestine. Weak levels in heart and lung.

The protein resides in the secreted. It is found in the extracellular space. It localises to the extracellular matrix. The catalysed reaction is Similar to stromelysin 1, but action on collagen types III, IV and V is weak.. In terms of biological role, can degrade fibronectin, gelatins of type I, III, IV, and V; weakly collagens III, IV, and V. Activates procollagenase. The sequence is that of Stromelysin-2 (Mmp10) from Mus musculus (Mouse).